We begin with the raw amino-acid sequence, 116 residues long: UPF0134 protein MPN_038 (116 aa).

The protein belongs to the UPF0134 family.

The chain is UPF0134 protein MPN_038 from Mycoplasma pneumoniae (strain ATCC 29342 / M129 / Subtype 1) (Mycoplasmoides pneumoniae).